We begin with the raw amino-acid sequence, 315 residues long: Methionyl-tRNA formyltransferase (315 aa).

113 to 116 lines the (6S)-5,6,7,8-tetrahydrofolate pocket; sequence SLLP.

This sequence belongs to the Fmt family.

The enzyme catalyses L-methionyl-tRNA(fMet) + (6R)-10-formyltetrahydrofolate = N-formyl-L-methionyl-tRNA(fMet) + (6S)-5,6,7,8-tetrahydrofolate + H(+). Functionally, attaches a formyl group to the free amino group of methionyl-tRNA(fMet). The formyl group appears to play a dual role in the initiator identity of N-formylmethionyl-tRNA by promoting its recognition by IF2 and preventing the misappropriation of this tRNA by the elongation apparatus. This chain is Methionyl-tRNA formyltransferase, found in Salmonella enteritidis PT4 (strain P125109).